The sequence spans 141 residues: Lutropin subunit beta (141 aa).

The signal sequence occupies residues 1–20 (MEMLQGLLLLMLLSMGGTWA). 6 disulfides stabilise this stretch: C29–C77, C43–C92, C46–C130, C54–C108, C58–C110, and C113–C120. N-linked (GlcNAc...) asparagine glycosylation is found at N33 and N50.

It belongs to the glycoprotein hormones subunit beta family. As to quaternary structure, heterodimer of a common alpha chain and a unique beta chain which confers biological specificity to thyrotropin, lutropin, follitropin and gonadotropin.

Its subcellular location is the secreted. Promotes spermatogenesis and ovulation by stimulating the testes and ovaries to synthesize steroids. This is Lutropin subunit beta (LHB) from Pongo pygmaeus (Bornean orangutan).